Here is a 599-residue protein sequence, read N- to C-terminus: Elongation factor 4 (599 aa).

Residues 2 to 184 enclose the tr-type G domain; it reads KNIRNFSIIA…RLVRDIPPPQ (183 aa). GTP contacts are provided by residues 14–19 and 131–134; these read DHGKST and NKID.

Belongs to the TRAFAC class translation factor GTPase superfamily. Classic translation factor GTPase family. LepA subfamily.

It is found in the cell inner membrane. It catalyses the reaction GTP + H2O = GDP + phosphate + H(+). In terms of biological role, required for accurate and efficient protein synthesis under certain stress conditions. May act as a fidelity factor of the translation reaction, by catalyzing a one-codon backward translocation of tRNAs on improperly translocated ribosomes. Back-translocation proceeds from a post-translocation (POST) complex to a pre-translocation (PRE) complex, thus giving elongation factor G a second chance to translocate the tRNAs correctly. Binds to ribosomes in a GTP-dependent manner. This chain is Elongation factor 4, found in Salmonella agona (strain SL483).